Reading from the N-terminus, the 878-residue chain is Pyruvate dehydrogenase phosphatase regulatory subunit, mitochondrial (878 aa).

A mitochondrion-targeting transit peptide spans 1–93 (MLYRLLSIVQ…CAGILSTARH (93 aa)).

Belongs to the GcvT family. Heterodimer of a catalytic (PDP1) and a regulatory (PDPR) subunit.

The protein resides in the mitochondrion matrix. Decreases the sensitivity of PDP1 to magnesium ions, and this inhibition is reversed by the polyamine spermine. In Mus musculus (Mouse), this protein is Pyruvate dehydrogenase phosphatase regulatory subunit, mitochondrial (Pdpr).